The chain runs to 171 residues: Translation initiation factor IF-3 (171 aa).

It belongs to the IF-3 family. As to quaternary structure, monomer.

It localises to the cytoplasm. IF-3 binds to the 30S ribosomal subunit and shifts the equilibrium between 70S ribosomes and their 50S and 30S subunits in favor of the free subunits, thus enhancing the availability of 30S subunits on which protein synthesis initiation begins. The chain is Translation initiation factor IF-3 from Listeria innocua serovar 6a (strain ATCC BAA-680 / CLIP 11262).